A 275-amino-acid chain; its full sequence is 4-deoxy-L-threo-5-hexosulose-uronate ketol-isomerase (275 aa).

Zn(2+) is bound by residues histidine 193, histidine 195, glutamate 200, and histidine 242.

Belongs to the KduI family. Zn(2+) serves as cofactor.

It catalyses the reaction 5-dehydro-4-deoxy-D-glucuronate = 3-deoxy-D-glycero-2,5-hexodiulosonate. Its pathway is glycan metabolism; pectin degradation; 2-dehydro-3-deoxy-D-gluconate from pectin: step 4/5. Functionally, catalyzes the isomerization of 5-dehydro-4-deoxy-D-glucuronate to 3-deoxy-D-glycero-2,5-hexodiulosonate. The protein is 4-deoxy-L-threo-5-hexosulose-uronate ketol-isomerase of Bacillus licheniformis (strain ATCC 14580 / DSM 13 / JCM 2505 / CCUG 7422 / NBRC 12200 / NCIMB 9375 / NCTC 10341 / NRRL NRS-1264 / Gibson 46).